The sequence spans 62 residues: Large ribosomal subunit protein bL28 (62 aa).

It belongs to the bacterial ribosomal protein bL28 family.

The sequence is that of Large ribosomal subunit protein bL28 from Halalkalibacterium halodurans (strain ATCC BAA-125 / DSM 18197 / FERM 7344 / JCM 9153 / C-125) (Bacillus halodurans).